A 91-amino-acid polypeptide reads, in one-letter code: Anthranilate synthase component 2 (91 aa).

The Glutamine amidotransferase type-1 domain occupies 4–91 (NILIIDNYDS…CLGHQAIGEA (88 aa)). 55-57 (GPG) is an L-glutamine binding site. Cysteine 82 acts as the Nucleophile; for GATase activity in catalysis. An L-glutamine-binding site is contributed by glutamine 86.

In terms of assembly, heterotetramer consisting of two non-identical subunits: a beta subunit (TrpG) and a large alpha subunit (TrpE).

It carries out the reaction chorismate + L-glutamine = anthranilate + pyruvate + L-glutamate + H(+). It participates in amino-acid biosynthesis; L-tryptophan biosynthesis; L-tryptophan from chorismate: step 1/5. In terms of biological role, part of a heterotetrameric complex that catalyzes the two-step biosynthesis of anthranilate, an intermediate in the biosynthesis of L-tryptophan. In the first step, the glutamine-binding beta subunit (TrpG) of anthranilate synthase (AS) provides the glutamine amidotransferase activity which generates ammonia as a substrate that, along with chorismate, is used in the second step, catalyzed by the large alpha subunit of AS (TrpE) to produce anthranilate. In the absence of TrpG, TrpE can synthesize anthranilate directly from chorismate and high concentrations of ammonia. The polypeptide is Anthranilate synthase component 2 (trpG) (Acetivibrio thermocellus (Hungateiclostridium thermocellum)).